The primary structure comprises 318 residues: NADH-ubiquinone oxidoreductase chain 1 (318 aa).

Helical transmembrane passes span 2–22 (FMLN…FLTL), 68–88 (ITMF…MWIP), 100–120 (LGVL…LWSG), 147–167 (AIIL…TLII), 171–191 (YIWL…STLA), 217–237 (GGPF…MNAL), 254–273 (LYTT…FLWI), and 294–314 (LPLT…MAGI).

It belongs to the complex I subunit 1 family.

Its subcellular location is the mitochondrion inner membrane. It catalyses the reaction a ubiquinone + NADH + 5 H(+)(in) = a ubiquinol + NAD(+) + 4 H(+)(out). Core subunit of the mitochondrial membrane respiratory chain NADH dehydrogenase (Complex I) that is believed to belong to the minimal assembly required for catalysis. Complex I functions in the transfer of electrons from NADH to the respiratory chain. The immediate electron acceptor for the enzyme is believed to be ubiquinone. This Hsunycteris thomasi (Thomas's nectar bat) protein is NADH-ubiquinone oxidoreductase chain 1 (MT-ND1).